A 433-amino-acid polypeptide reads, in one-letter code: MKIKTNKINSANAQIEAEIPRTTIDANIEKIAKNLTKTASVQGFRKGKVPVTVIKKQYGERLIQDAEAEALREVLNKGLDELKVAMSALIGEPNISKFDKSDDKIEVTVKIAMRPEINLENYADMVAPFKKPVISDKEVEDRLEKLADSQGKFVDLKKKRAAKDGDSAIIDFEGSIDGELFEGGAAQEFALVLGSNQFISGFEEQVVGMKIGEEKVIKVTFPESYGSEKLAGKDAEFKVTLHNIQEKVKVEIDEAFAAKMLAGQDDKSLENLRAQIKLQLENEALAKLYNEELKSALLETYVEKINFDLPEFVVEQEIDVSLNRKASTMSEDEIKELRENADKLQELRETFRLDAQKSVKATFIIDALATKEKVRVDENEVMQTIYYEAMQMGQDPRLAYDKYKNAGYLPAIQMSMVEDKVLTQILNSKIKEA.

In terms of domain architecture, PPIase FKBP-type spans 165 to 250 (GDSAIIDFEG…LHNIQEKVKV (86 aa)).

The protein belongs to the FKBP-type PPIase family. Tig subfamily.

It is found in the cytoplasm. The catalysed reaction is [protein]-peptidylproline (omega=180) = [protein]-peptidylproline (omega=0). Involved in protein export. Acts as a chaperone by maintaining the newly synthesized protein in an open conformation. Functions as a peptidyl-prolyl cis-trans isomerase. This is Trigger factor from Sulfurimonas denitrificans (strain ATCC 33889 / DSM 1251) (Thiomicrospira denitrificans (strain ATCC 33889 / DSM 1251)).